Reading from the N-terminus, the 401-residue chain is Exodeoxyribonuclease 7 large subunit (401 aa).

It belongs to the XseA family. Heterooligomer composed of large and small subunits.

The protein resides in the cytoplasm. The enzyme catalyses Exonucleolytic cleavage in either 5'- to 3'- or 3'- to 5'-direction to yield nucleoside 5'-phosphates.. Bidirectionally degrades single-stranded DNA into large acid-insoluble oligonucleotides, which are then degraded further into small acid-soluble oligonucleotides. In Syntrophotalea carbinolica (strain DSM 2380 / NBRC 103641 / GraBd1) (Pelobacter carbinolicus), this protein is Exodeoxyribonuclease 7 large subunit.